A 214-amino-acid chain; its full sequence is Thiamine-phosphate synthase (214 aa).

4-amino-2-methyl-5-(diphosphooxymethyl)pyrimidine-binding positions include 40–44 (QLREK) and N72. Mg(2+) contacts are provided by D73 and D92. S110 is a binding site for 4-amino-2-methyl-5-(diphosphooxymethyl)pyrimidine. Residue 137 to 139 (SPT) participates in 2-[(2R,5Z)-2-carboxy-4-methylthiazol-5(2H)-ylidene]ethyl phosphate binding. K140 contacts 4-amino-2-methyl-5-(diphosphooxymethyl)pyrimidine. 2-[(2R,5Z)-2-carboxy-4-methylthiazol-5(2H)-ylidene]ethyl phosphate contacts are provided by residues G167 and 185 to 186 (IS).

It belongs to the thiamine-phosphate synthase family. Mg(2+) is required as a cofactor.

The enzyme catalyses 2-[(2R,5Z)-2-carboxy-4-methylthiazol-5(2H)-ylidene]ethyl phosphate + 4-amino-2-methyl-5-(diphosphooxymethyl)pyrimidine + 2 H(+) = thiamine phosphate + CO2 + diphosphate. It catalyses the reaction 2-(2-carboxy-4-methylthiazol-5-yl)ethyl phosphate + 4-amino-2-methyl-5-(diphosphooxymethyl)pyrimidine + 2 H(+) = thiamine phosphate + CO2 + diphosphate. The catalysed reaction is 4-methyl-5-(2-phosphooxyethyl)-thiazole + 4-amino-2-methyl-5-(diphosphooxymethyl)pyrimidine + H(+) = thiamine phosphate + diphosphate. It participates in cofactor biosynthesis; thiamine diphosphate biosynthesis; thiamine phosphate from 4-amino-2-methyl-5-diphosphomethylpyrimidine and 4-methyl-5-(2-phosphoethyl)-thiazole: step 1/1. Its function is as follows. Condenses 4-methyl-5-(beta-hydroxyethyl)thiazole monophosphate (THZ-P) and 2-methyl-4-amino-5-hydroxymethyl pyrimidine pyrophosphate (HMP-PP) to form thiamine monophosphate (TMP). This is Thiamine-phosphate synthase from Wolinella succinogenes (strain ATCC 29543 / DSM 1740 / CCUG 13145 / JCM 31913 / LMG 7466 / NCTC 11488 / FDC 602W) (Vibrio succinogenes).